The sequence spans 165 residues: 3-isopropylmalate dehydratase small subunit 2 (165 aa).

It belongs to the LeuD family. LeuD type 2 subfamily. Heterodimer of LeuC and LeuD.

The catalysed reaction is (2R,3S)-3-isopropylmalate = (2S)-2-isopropylmalate. The protein operates within amino-acid biosynthesis; L-leucine biosynthesis; L-leucine from 3-methyl-2-oxobutanoate: step 2/4. Functionally, catalyzes the isomerization between 2-isopropylmalate and 3-isopropylmalate, via the formation of 2-isopropylmaleate. This chain is 3-isopropylmalate dehydratase small subunit 2 (leuD2), found in Archaeoglobus fulgidus (strain ATCC 49558 / DSM 4304 / JCM 9628 / NBRC 100126 / VC-16).